The chain runs to 393 residues: Serine/threonine-protein kinase US3 homolog (393 aa).

The region spanning 93-378 is the Protein kinase domain; sequence FVILKTFTPG…AEVLLNHSVF (286 aa). Residues 99–107 and lysine 122 each bind ATP; that span reads FTPGAEGFA. The Proton acceptor role is filled by aspartate 206.

This sequence belongs to the protein kinase superfamily. Ser/Thr protein kinase family. In terms of processing, phosphorylated by ORF47; this phosphorylation regulates subsequent phosphorylation of proteins 24 and 27 by ORF66. Autophosphorylated.

Its subcellular location is the host cytoplasm. It localises to the host nucleus. The catalysed reaction is L-seryl-[protein] + ATP = O-phospho-L-seryl-[protein] + ADP + H(+). It catalyses the reaction L-threonyl-[protein] + ATP = O-phospho-L-threonyl-[protein] + ADP + H(+). Multifunctional serine/threonine kinase that plays a role in several processes including egress of virus particles from the nucleus, modulation of the actin cytoskeleton and inhibition of apoptosis. Phosphorylates proteins 24 and 27, two critical regulators of capsid budding from nucleus to endoplasmic reticulum, thereby facilitating virion egress. Modulates and redistributes host components of the nuclear envelope, including LMNA, emerin/EMD and the nuclear matrix protein MATR3. Phosphorylates envelope glycoprotein B (gB), probably to direct it to the cell surface. Promotes virus intracellular spread by restructuring host cell cytoskeleton. Blocks host apoptosis to extend cell survival and allow efficient viral replication. Promotes viral gene expression by phosphorylating host HDAC2 to reduce viral genome silencing. Down-regulates class I major histocompatibility complex (MHC-I) surface expression. Additionally, phosphorylates IE62 and targets it to the cytoplasm. The nuclear exclusion of IE62 enables the packaging of abundant levels of IE62 into virions. In Varicella-zoster virus (strain Dumas) (HHV-3), this protein is Serine/threonine-protein kinase US3 homolog (66).